We begin with the raw amino-acid sequence, 382 residues long: Inactive ubiquitin-specific protease 5 (382 aa).

The DUSP domain occupies 16–141 (VPAEEERALI…GGPTLPRKAI (126 aa)). The USP domain occupies 323-382 (TGLLNLGNTCFMNSAIQCLVHTPEFARYFREDYHREINWQNPLGMVVSTLSTSMALKPYV).

It belongs to the peptidase C19 family. Widely expressed with the highest expression in floral organs.

The protein resides in the cell membrane. In terms of biological role, plays an important role in the development of floral organs and chloroplasts. Does not possess deubiquitinating enzyme activity in vitro. This Oryza sativa subsp. japonica (Rice) protein is Inactive ubiquitin-specific protease 5.